Here is a 122-residue protein sequence, read N- to C-terminus: Autophagy-related protein 8b (122 aa).

G117 is lipidated: Phosphatidylethanolamine amidated glycine. Residues 118 to 122 (GSFYC) constitute a propeptide, removed in mature form.

Belongs to the ATG8 family. As to quaternary structure, interacts with ATG4. Interacts with NBR1. In terms of processing, the C-terminal 5 residues are removed by ATG4 to expose Gly-117 at the C-terminus. This Gly-117 forms then a thioester bond with the 'Cys-558' of ATG7 (E1-like activating enzyme) before being transferred to the 'Cys-258' of ATG3 (the specific E2 conjugating enzyme), in order to be finally amidated with phosphatidylethanolamine. This lipid modification anchors ATG8 to autophagosomes. In terms of tissue distribution, constitutively expressed.

The protein resides in the cytoplasmic vesicle. It is found in the autophagosome membrane. Its subcellular location is the vacuole membrane. It localises to the cytoplasm. The protein localises to the cytoskeleton. Ubiquitin-like modifier involved in autophagosomes formation. May mediate the delivery of the autophagosomes to the vacuole via the microtubule cytoskeleton. This is Autophagy-related protein 8b (ATG8B) from Arabidopsis thaliana (Mouse-ear cress).